Reading from the N-terminus, the 176-residue chain is Ribosome maturation factor RimP (176 aa).

Belongs to the RimP family.

Its subcellular location is the cytoplasm. Its function is as follows. Required for maturation of 30S ribosomal subunits. In Mycolicibacterium vanbaalenii (strain DSM 7251 / JCM 13017 / BCRC 16820 / KCTC 9966 / NRRL B-24157 / PYR-1) (Mycobacterium vanbaalenii), this protein is Ribosome maturation factor RimP.